The primary structure comprises 431 residues: UDP-N-acetylmuramate--L-alanine ligase (431 aa).

108–114 (GSHGKTS) is an ATP binding site.

The protein belongs to the MurCDEF family.

The protein localises to the cytoplasm. The enzyme catalyses UDP-N-acetyl-alpha-D-muramate + L-alanine + ATP = UDP-N-acetyl-alpha-D-muramoyl-L-alanine + ADP + phosphate + H(+). It participates in cell wall biogenesis; peptidoglycan biosynthesis. Functionally, cell wall formation. The polypeptide is UDP-N-acetylmuramate--L-alanine ligase (Exiguobacterium sibiricum (strain DSM 17290 / CCUG 55495 / CIP 109462 / JCM 13490 / 255-15)).